Consider the following 636-residue polypeptide: Chaperone protein HtpG (636 aa).

Residues 1–344 are a; substrate-binding; it reads MTLEADKQTH…SADLSLNVSR (344 aa). Residues 345–561 form a b region; that stretch reads EILQSGPVVD…EGDLGLQMRQ (217 aa). Residues 562–636 form a c region; sequence LLEASGQKVP…LNKLLLELSA (75 aa).

The protein belongs to the heat shock protein 90 family. In terms of assembly, homodimer.

The protein localises to the cytoplasm. Molecular chaperone. Has ATPase activity. This Xylella fastidiosa (strain Temecula1 / ATCC 700964) protein is Chaperone protein HtpG.